Reading from the N-terminus, the 830-residue chain is Pentatricopeptide repeat-containing protein At5g55740, chloroplastic (830 aa).

The transit peptide at 1–59 (MASLPFNTIPNKVPFSVSSKPSSKHHDEQAHSPSSTSYFHRVSSLCKNGEIKEALSLVT) directs the protein to the chloroplast. A disordered region spans residues 15 to 36 (FSVSSKPSSKHHDEQAHSPSST). 19 PPR repeats span residues 69-103 (GPEI…GDFY), 106-136 (NEYI…LRVR), 137-171 (NVFS…EIFP), 172-206 (DNFV…GLED), 207-237 (CVFV…IPDR), 238-272 (NAVA…GVEP), 273-307 (TRVT…GMEL), 308-338 (DNIL…MFEK), 339-373 (DVVT…KLKY), 374-408 (DCVT…SFES), 409-439 (DIVL…TVEK), 440-474 (DLIL…GVPP), 475-509 (NVIT…GIIP), 510-544 (NLIS…GLRP), 545-575 (NAFS…IIRN), 581-611 (LVSI…KLYS), 612-646 (ELPL…GLKP), 647-682 (DNIT…SMKP), and 683-713 (CLEH…MPFK). The tract at residues 718–793 (MIQSLVASCN…KPGCSWIQIT (76 aa)) is type E motif. Residues 796-826 (EGVHVFVANDKTHTRINEIQMMLALLLYDMG) are type E(+) motif.

This sequence belongs to the PPR family. PCMP-E subfamily.

Its subcellular location is the plastid. It localises to the chloroplast. Plays a major role in chloroplast RNA editing. Acts as a site-recognition transacting factor involved in the edition of the site 2 of ndhD (ndhD-2), which encodes a subunit of the NDH complex. This chain is Pentatricopeptide repeat-containing protein At5g55740, chloroplastic (CRR21), found in Arabidopsis thaliana (Mouse-ear cress).